The sequence spans 404 residues: Ribosomal RNA large subunit methyltransferase F (404 aa).

Basic residues-rich tracts occupy residues 1–10 (MTKHSQKQNR) and 18–29 (QTRRKKPAGKLK). Disordered stretches follow at residues 1-54 (MTKH…HERN), 156-177 (GTRQ…QRYK), and 289-308 (RAAK…PDAN). A compositionally biased stretch (basic and acidic residues) spans 30–54 (AKSEAKLDTRGKPETTEKKGLHERN). Polar residues predominate over residues 157–172 (TRQNVPYASKPESSAP).

Belongs to the methyltransferase superfamily. METTL16/RlmF family.

The protein resides in the cytoplasm. It carries out the reaction adenosine(1618) in 23S rRNA + S-adenosyl-L-methionine = N(6)-methyladenosine(1618) in 23S rRNA + S-adenosyl-L-homocysteine + H(+). Its function is as follows. Specifically methylates the adenine in position 1618 of 23S rRNA. This chain is Ribosomal RNA large subunit methyltransferase F, found in Shewanella sediminis (strain HAW-EB3).